A 420-amino-acid chain; its full sequence is Glutamate dehydrogenase (420 aa).

The active site involves K105. 220-226 lines the NAD(+) pocket; it reads GYGNAGY.

This sequence belongs to the Glu/Leu/Phe/Val dehydrogenases family. In terms of assembly, homohexamer.

The protein resides in the cytoplasm. It catalyses the reaction L-glutamate + NAD(+) + H2O = 2-oxoglutarate + NH4(+) + NADH + H(+). The catalysed reaction is L-glutamate + NADP(+) + H2O = 2-oxoglutarate + NH4(+) + NADPH + H(+). This is Glutamate dehydrogenase (gdhA) from Pyrococcus abyssi (strain GE5 / Orsay).